Here is a 182-residue protein sequence, read N- to C-terminus: UPF0587 protein YCR090C (182 aa).

4 residues coordinate Zn(2+): C36, C39, C70, and C73.

The protein belongs to the UPF0587 family.

The protein is UPF0587 protein YCR090C of Saccharomyces cerevisiae (strain ATCC 204508 / S288c) (Baker's yeast).